A 397-amino-acid polypeptide reads, in one-letter code: Cell division protein DivIB (397 aa).

At 1–138 (MTTKDKGDQK…RIERIHLYRA (138 aa)) the chain is on the cytoplasmic side. Positions 24–37 (QEYLEKKSQEKASE) are enriched in basic and acidic residues. The segment at 24–115 (QEYLEKKSQE…DRTEKFIGQA (92 aa)) is disordered. Residues 74–103 (ASDDDETNESEESEDVEEPEEENIEESSDV) show a composition bias toward acidic residues. A helical transmembrane segment spans residues 139-159 (LPVLVISSLLILLSLYFITPL). One can recognise a POTRA domain in the interval 160-231 (GSLKNLVVTG…ITFKIQVTEY (72 aa)). The Extracellular portion of the chain corresponds to 160–397 (GSLKNLVVTG…PSDVTDETNN (238 aa)). The disordered stretch occupies residues 360–397 (LVQKEEQDQEQEKEESSEETVPGETEAAPSDVTDETNN). The segment covering 366–377 (QDQEQEKEESSE) has biased composition (acidic residues).

The protein belongs to the FtsQ/DivIB family. DivIB subfamily.

Its subcellular location is the cell membrane. Functionally, cell division protein that may be involved in stabilizing or promoting the assembly of the division complex. In Streptococcus gordonii (strain Challis / ATCC 35105 / BCRC 15272 / CH1 / DL1 / V288), this protein is Cell division protein DivIB.